An 82-amino-acid polypeptide reads, in one-letter code: Large ribosomal subunit protein bL31B (82 aa).

This sequence belongs to the bacterial ribosomal protein bL31 family. Type B subfamily. As to quaternary structure, part of the 50S ribosomal subunit.

The protein is Large ribosomal subunit protein bL31B of Bacillus velezensis (strain DSM 23117 / BGSC 10A6 / LMG 26770 / FZB42) (Bacillus amyloliquefaciens subsp. plantarum).